Here is a 1172-residue protein sequence, read N- to C-terminus: Lysylphosphatidylglycerol biosynthesis bifunctional protein LysX (1172 aa).

Positions 1-34 are disordered; it reads MGLHLTVPGLRRDGRGVQSNSHDTSSKTTADISR. Residues 1–663 form a phosphatidylglycerol lysyltransferase region; the sequence is MGLHLTVPGL…LLHHDGSAPD (663 aa). The span at 17 to 31 shows a compositional bias: polar residues; it reads VQSNSHDTSSKTTAD. The next 7 helical transmembrane spans lie at 80–100, 122–142, 146–166, 177–197, 214–234, 272–292, and 612–632; these read VPAA…LASV, FPDT…ALTA, IAWL…AAEI, FGEN…VLGY, AVWL…VELF, AIFG…LFLS, and VIPR…LPFS. Residues 664 to 1172 form a lysine--tRNA ligase region; it reads VSGLRQVGLT…TLPFPLAKPH (509 aa). A DNA-binding region (OB) is located at residues 726–804; it reads VSVSGRIMRI…SLIVSGWRLI (79 aa). Residues D1084 and E1091 each coordinate Mg(2+).

In the N-terminal section; belongs to the LPG synthetase family. It in the C-terminal section; belongs to the class-II aminoacyl-tRNA synthetase family. Mg(2+) is required as a cofactor.

Its subcellular location is the cell membrane. It carries out the reaction tRNA(Lys) + L-lysine + ATP = L-lysyl-tRNA(Lys) + AMP + diphosphate. The enzyme catalyses L-lysyl-tRNA(Lys) + a 1,2-diacyl-sn-glycero-3-phospho-(1'-sn-glycerol) = a 1,2-diacyl-sn-glycero-3-phospho-1'-(3'-O-L-lysyl)-sn-glycerol + tRNA(Lys). In terms of biological role, catalyzes the production of L-lysyl-tRNA(Lys)transfer and the transfer of a lysyl group from L-lysyl-tRNA(Lys) to membrane-bound phosphatidylglycerol (PG), which produces lysylphosphatidylglycerol (LPG), one of the components of the bacterial membrane with a positive net charge. LPG synthesis contributes to the resistance to cationic antimicrobial peptides (CAMPs) and likely protects M.tuberculosis against the CAMPs produced by competiting microorganisms (bacteriocins). In fact, the modification of anionic phosphatidylglycerol with positively charged L-lysine results in repulsion of the peptides. This is Lysylphosphatidylglycerol biosynthesis bifunctional protein LysX (lysX) from Mycobacterium tuberculosis (strain F11).